The primary structure comprises 310 residues: Ribosomal RNA small subunit methyltransferase H (310 aa).

S-adenosyl-L-methionine contacts are provided by residues 32–34 (GGH), aspartate 52, phenylalanine 79, aspartate 100, and glutamine 107.

This sequence belongs to the methyltransferase superfamily. RsmH family.

The protein resides in the cytoplasm. It carries out the reaction cytidine(1402) in 16S rRNA + S-adenosyl-L-methionine = N(4)-methylcytidine(1402) in 16S rRNA + S-adenosyl-L-homocysteine + H(+). Functionally, specifically methylates the N4 position of cytidine in position 1402 (C1402) of 16S rRNA. This is Ribosomal RNA small subunit methyltransferase H from Bacillus thuringiensis subsp. konkukian (strain 97-27).